Here is a 251-residue protein sequence, read N- to C-terminus: Hydroxyacylglutathione hydrolase (251 aa).

Zn(2+) contacts are provided by H53, H55, D57, H58, H110, D127, and H165.

Belongs to the metallo-beta-lactamase superfamily. Glyoxalase II family. As to quaternary structure, monomer. Requires Zn(2+) as cofactor.

The enzyme catalyses an S-(2-hydroxyacyl)glutathione + H2O = a 2-hydroxy carboxylate + glutathione + H(+). It functions in the pathway secondary metabolite metabolism; methylglyoxal degradation; (R)-lactate from methylglyoxal: step 2/2. Its function is as follows. Thiolesterase that catalyzes the hydrolysis of S-D-lactoyl-glutathione to form glutathione and D-lactic acid. This Salmonella gallinarum (strain 287/91 / NCTC 13346) protein is Hydroxyacylglutathione hydrolase.